The sequence spans 74 residues: uncharacterized protein (74 aa).

The N-terminal stretch at 1–19 (MNPGFDAVDQETAAAQAVA) is a signal peptide.

This is an uncharacterized protein from Mycobacterium tuberculosis (strain ATCC 25618 / H37Rv).